Consider the following 509-residue polypeptide: Steroid 17-alpha-hydroxylase/17,20 lyase (509 aa).

Asparagine 202 is a substrate binding site. Residue cysteine 442 participates in heme binding.

Belongs to the cytochrome P450 family. Heme is required as a cofactor.

Its subcellular location is the endoplasmic reticulum membrane. The protein resides in the microsome membrane. It carries out the reaction a C21-steroid + reduced [NADPH--hemoprotein reductase] + O2 = a 17alpha-hydroxy-C21-steroid + oxidized [NADPH--hemoprotein reductase] + H2O + H(+). The enzyme catalyses progesterone + reduced [NADPH--hemoprotein reductase] + O2 = 17alpha-hydroxyprogesterone + oxidized [NADPH--hemoprotein reductase] + H2O + H(+). It catalyses the reaction pregnenolone + reduced [NADPH--hemoprotein reductase] + O2 = 17alpha-hydroxypregnenolone + oxidized [NADPH--hemoprotein reductase] + H2O + H(+). The catalysed reaction is 17alpha-hydroxyprogesterone + reduced [NADPH--hemoprotein reductase] + O2 = androst-4-ene-3,17-dione + acetate + oxidized [NADPH--hemoprotein reductase] + H2O + 2 H(+). It carries out the reaction 17alpha-hydroxyprogesterone + reduced [NADPH--hemoprotein reductase] + O2 = 16alpha,17alpha-dihydroxyprogesterone + oxidized [NADPH--hemoprotein reductase] + H2O + H(+). The enzyme catalyses 16alpha,17alpha-dihydroxyprogesterone + reduced [NADPH--hemoprotein reductase] + O2 = 6beta,16alpha,17alpha-trihydroxyprogesterone + oxidized [NADPH--hemoprotein reductase] + H2O + H(+). It catalyses the reaction 17alpha-hydroxypregnenolone + reduced [NADPH--hemoprotein reductase] + O2 = 3beta-hydroxyandrost-5-en-17-one + acetate + oxidized [NADPH--hemoprotein reductase] + H2O + 2 H(+). The catalysed reaction is 16alpha,17alpha-dihydroxypregnenolone + reduced [NADPH--hemoprotein reductase] + O2 = 3beta,16alpha-dihydroxy-androst-5-en-17-one + acetate + oxidized [NADPH--hemoprotein reductase] + H2O + 2 H(+). It carries out the reaction 3beta-hydroxyandrost-5-en-17-one + reduced [NADPH--hemoprotein reductase] + O2 = 3beta,16alpha-dihydroxy-androst-5-en-17-one + oxidized [NADPH--hemoprotein reductase] + H2O + H(+). The enzyme catalyses androst-4-ene-3,17-dione + reduced [NADPH--hemoprotein reductase] + O2 = 16alpha-hydroxyandrost-4-ene-3,17-dione + oxidized [NADPH--hemoprotein reductase] + H2O + H(+). Its pathway is steroid hormone biosynthesis. It functions in the pathway steroid biosynthesis; glucocorticoid biosynthesis. Its activity is regulated as follows. Regulated predominantly by intracellular cAMP levels. The 17,20-lyase activity is stimulated by cytochrome b5, which acts as an allosteric effector increasing the Vmax of the lyase activity. Its function is as follows. A cytochrome P450 monooxygenase involved in corticoid and androgen biosynthesis. Catalyzes 17-alpha hydroxylation of C21 steroids, which is common for both pathways. A second oxidative step, required only for androgen synthesis, involves an acyl-carbon cleavage. The 17-alpha hydroxy intermediates, as part of adrenal glucocorticoids biosynthesis pathway, are precursors of cortisol. Hydroxylates steroid hormones, pregnenolone and progesterone to form 17-alpha hydroxy metabolites, followed by the cleavage of the C17-C20 bond to form C19 steroids, dehydroepiandrosterone (DHEA) and androstenedione. Has 16-alpha hydroxylase activity. Catalyzes 16-alpha hydroxylation of 17-alpha hydroxy pregnenolone, followed by the cleavage of the C17-C20 bond to form 16-alpha-hydroxy DHEA. Also 16-alpha hydroxylates androgens, relevant for estriol synthesis. Mechanistically, uses molecular oxygen inserting one oxygen atom into a substrate, and reducing the second into a water molecule, with two electrons provided by NADPH via cytochrome P450 reductase (CPR; NADPH-ferrihemoprotein reductase). In Capra hircus (Goat), this protein is Steroid 17-alpha-hydroxylase/17,20 lyase (CYP17A1).